Consider the following 157-residue polypeptide: SsrA-binding protein (157 aa).

A disordered region spans residues 126–157; it reads GLGKGKQAHDKREAVKERDWQRDRARLMRDRG. The span at 132–157 shows a compositional bias: basic and acidic residues; the sequence is QAHDKREAVKERDWQRDRARLMRDRG.

This sequence belongs to the SmpB family.

The protein localises to the cytoplasm. Its function is as follows. Required for rescue of stalled ribosomes mediated by trans-translation. Binds to transfer-messenger RNA (tmRNA), required for stable association of tmRNA with ribosomes. tmRNA and SmpB together mimic tRNA shape, replacing the anticodon stem-loop with SmpB. tmRNA is encoded by the ssrA gene; the 2 termini fold to resemble tRNA(Ala) and it encodes a 'tag peptide', a short internal open reading frame. During trans-translation Ala-aminoacylated tmRNA acts like a tRNA, entering the A-site of stalled ribosomes, displacing the stalled mRNA. The ribosome then switches to translate the ORF on the tmRNA; the nascent peptide is terminated with the 'tag peptide' encoded by the tmRNA and targeted for degradation. The ribosome is freed to recommence translation, which seems to be the essential function of trans-translation. This is SsrA-binding protein from Methylobacterium radiotolerans (strain ATCC 27329 / DSM 1819 / JCM 2831 / NBRC 15690 / NCIMB 10815 / 0-1).